The sequence spans 160 residues: Eosinophil cationic protein (160 aa).

The N-terminal stretch at 1 to 27 is a signal peptide; the sequence is MVPKLFTPQICLLLLLGLMGVEGSLHA. The segment at 28 to 72 is required for nearly all of the bactericidal activities; partially involved in LPS-binding; sequence RPPQFTKAQWFAIQHINVNPPRCTIAMRVINNYQRRCKNQNTFLR. His-42 functions as the Proton acceptor in the catalytic mechanism. Disulfide bonds link Cys-50–Cys-110, Cys-64–Cys-123, Cys-82–Cys-138, and Cys-89–Cys-98. Tyr-60 is modified (3'-nitrotyrosine). 65–69 serves as a coordination point for substrate; that stretch reads KNQNT. N-linked (GlcNAc...) asparagine glycans are attached at residues Asn-84, Asn-92, and Asn-119. His-155 (proton donor) is an active-site residue.

It belongs to the pancreatic ribonuclease family. Interacts with bacterial lipopolysaccharide (LPS) and lipoteichoic acid (LTA). In vitro interacts with phospholipid bilayers.

The protein resides in the secreted. In terms of biological role, cytotoxin and helminthotoxin with low-efficiency ribonuclease activity. Possesses a wide variety of biological activities. Exhibits antibacterial activity. The chain is Eosinophil cationic protein (RNASE3) from Macaca nemestrina (Pig-tailed macaque).